Consider the following 567-residue polypeptide: MAQRIFTLILLLCSTSAFAGLFDAPGRSQFVPADRAFVFDFQQNQHDLTLSWQVKEGYYLYRKQISITPTKADIAAVQLPAGVWHEDEFYGKSEIYRKRLNVPVTVNQAAAGATLTITYQGCADAGFCYPPETKTVPLSEVAAAIDATPTPAVTQTGETSKPAAQLPFSALWALLIGIGIAFTPCVLPMYPLISGIVLGGRQRLSTGRALLLAFIYVQGMALTYTALGLVVAAAGLQFQAALQHPYVLIGLAIVFTLLALSMFGLFTLQLPSSLQTRLTLMSNRQQGGSPGGVFVMGAIAGLICSPCTTAPLSAILLYIAQSGNMWLGGGTLYLYALGMGLPLMLVTVFGNRLLPKSGPWMAHVKTAFGFVILALPVFLLERIIGEAWGLRLWSLLGVAFFGWAFITSLQARRAWMRIVQIILLAAALISVRPLQDWAFGSPSAQAPAHLNFTAISTVDELNQALAQAKGKPVMLDFYADWCVACKEFEKYTFSDPRVQQVLGDTVLLQANVTANNAQDVALLKHLQVLGLPTILFFDAQGQEQPQARVTGFMDAATFSAHLHDRQP.

A signal peptide spans 1–19; the sequence is MAQRIFTLILLLCSTSAFA. Cystine bridges form between cysteine 122–cysteine 128 and cysteine 185–cysteine 307. 7 consecutive transmembrane segments (helical) span residues 170-192, 212-234, 246-268, 297-319, 326-348, 358-380, and 387-409; these read ALWA…MYPL, LAFI…VAAA, YVLI…LFTL, GAIA…LLYI, WLGG…LVTV, GPWM…VFLL, and AWGL…ITSL. Positions 435 to 567 constitute a Thioredoxin domain; it reads QDWAFGSPSA…FSAHLHDRQP (133 aa). An intrachain disulfide couples cysteine 482 to cysteine 485.

This sequence belongs to the thioredoxin family. DsbD subfamily.

It localises to the cell inner membrane. The catalysed reaction is [protein]-dithiol + NAD(+) = [protein]-disulfide + NADH + H(+). The enzyme catalyses [protein]-dithiol + NADP(+) = [protein]-disulfide + NADPH + H(+). In terms of biological role, required to facilitate the formation of correct disulfide bonds in some periplasmic proteins and for the assembly of the periplasmic c-type cytochromes. Acts by transferring electrons from cytoplasmic thioredoxin to the periplasm. This transfer involves a cascade of disulfide bond formation and reduction steps. The sequence is that of Thiol:disulfide interchange protein DsbD from Salmonella typhi.